We begin with the raw amino-acid sequence, 902 residues long: Tiger protein B1 (902 aa).

The signal sequence occupies residues 1–24; it reads MKVIYIYLLLLLVCKFLFVKSSCS. The Extracellular segment spans residues 25–803; the sequence is LKVGKIECTK…IIYSENKSTG (779 aa). N-linked (GlcNAc...) asparagine glycosylation is found at asparagine 43, asparagine 144, asparagine 184, asparagine 223, asparagine 272, asparagine 279, asparagine 288, asparagine 358, asparagine 389, asparagine 398, asparagine 437, asparagine 559, asparagine 628, asparagine 644, asparagine 706, asparagine 753, asparagine 764, asparagine 771, and asparagine 799. Positions 249 to 323 constitute an IPT/TIG 1 domain; that stretch reads MEGVLNDNGG…ITIDGEYKSN (75 aa). IPT/TIG domains lie at 603 to 680 and 704 to 788; these read PIIE…ISSS and ITNT…IFQF. The helical transmembrane segment at 804–824 threads the bilayer; that stretch reads FPNEMYLGFVVFVIFIALISF. Residues 825–902 lie on the Cytoplasmic side of the membrane; sequence AAKNQIEKYF…IRRCFKEHTD (78 aa).

The protein resides in the cell membrane. Functionally, tgrB1 and tgrC1 are involved in kin discrimination. They play an essential role in aggregation and subsequent development. This chain is Tiger protein B1 (tgrB1), found in Dictyostelium discoideum (Social amoeba).